We begin with the raw amino-acid sequence, 505 residues long: NADH-quinone oxidoreductase subunit N 1 (505 aa).

The next 14 helical transmembrane spans lie at 18–38 (LIPE…EMVL), 45–65 (LIAT…AWDF), 84–104 (YVGQ…SILA), 116–136 (IEFY…AQAN), 138–158 (FVLF…LVSY), 173–193 (LIMG…LYGV), 223–243 (FLAA…IGAF), 271–291 (AGFA…WWLV), 292–312 (QPVL…AALT), 319–339 (LIGL…IASH), 345–365 (VGAV…VFGV), 391–411 (FLAA…PLAG), 429–449 (GLLA…FGWI), and 473–493 (VGAA…LFGV).

The protein belongs to the complex I subunit 2 family. As to quaternary structure, NDH-1 is composed of 14 different subunits. Subunits NuoA, H, J, K, L, M, N constitute the membrane sector of the complex.

Its subcellular location is the cell inner membrane. The enzyme catalyses a quinone + NADH + 5 H(+)(in) = a quinol + NAD(+) + 4 H(+)(out). NDH-1 shuttles electrons from NADH, via FMN and iron-sulfur (Fe-S) centers, to quinones in the respiratory chain. The immediate electron acceptor for the enzyme in this species is believed to be ubiquinone. Couples the redox reaction to proton translocation (for every two electrons transferred, four hydrogen ions are translocated across the cytoplasmic membrane), and thus conserves the redox energy in a proton gradient. The polypeptide is NADH-quinone oxidoreductase subunit N 1 (Opitutus terrae (strain DSM 11246 / JCM 15787 / PB90-1)).